A 126-amino-acid polypeptide reads, in one-letter code: uncharacterized protein (126 aa).

This is an uncharacterized protein from Homo sapiens (Human).